We begin with the raw amino-acid sequence, 317 residues long: Ribonuclease Z (317 aa).

Residues His-63, His-65, Asp-67, His-68, His-143, Asp-214, and His-272 each contribute to the Zn(2+) site. Asp-67 functions as the Proton acceptor in the catalytic mechanism.

It belongs to the RNase Z family. Homodimer. Requires Zn(2+) as cofactor.

The catalysed reaction is Endonucleolytic cleavage of RNA, removing extra 3' nucleotides from tRNA precursor, generating 3' termini of tRNAs. A 3'-hydroxy group is left at the tRNA terminus and a 5'-phosphoryl group is left at the trailer molecule.. Zinc phosphodiesterase, which displays some tRNA 3'-processing endonuclease activity. Probably involved in tRNA maturation, by removing a 3'-trailer from precursor tRNA. This chain is Ribonuclease Z, found in Ligilactobacillus salivarius (strain UCC118) (Lactobacillus salivarius).